A 247-amino-acid polypeptide reads, in one-letter code: Retbindin (247 aa).

Residues 1-31 form the signal peptide; sequence MAHEGHSQHSGLVWALRPILAWIFLVACGWS. 4 disulfides stabilise this stretch: cysteine 99/cysteine 169, cysteine 106/cysteine 146, cysteine 139/cysteine 183, and cysteine 152/cysteine 165.

Belongs to the folate receptor family. In terms of processing, not N-glycosylated. Expressed in the peripheral retina where it localizes to the inter-photoreceptor matrix (at protein level). May be produced by rod photoreceptors (at protein level).

It is found in the secreted. Its subcellular location is the extracellular space. It localises to the extracellular matrix. The protein localises to the interphotoreceptor matrix. The protein resides in the cell membrane. Its function is as follows. Riboflavin-binding protein which might have a role in retinal flavin transport. The protein is Retbindin (Rtbdn) of Mus musculus (Mouse).